A 345-amino-acid chain; its full sequence is Biotin synthase (345 aa).

One can recognise a Radical SAM core domain in the interval 38–256; that stretch reads RQVQVSTLLS…IAVARIMMPS (219 aa). Residues Cys-53, Cys-57, and Cys-60 each contribute to the [4Fe-4S] cluster site. Cys-97, Cys-128, Cys-188, and Arg-260 together coordinate [2Fe-2S] cluster.

Belongs to the radical SAM superfamily. Biotin synthase family. In terms of assembly, homodimer. [4Fe-4S] cluster is required as a cofactor. Requires [2Fe-2S] cluster as cofactor.

It carries out the reaction (4R,5S)-dethiobiotin + (sulfur carrier)-SH + 2 reduced [2Fe-2S]-[ferredoxin] + 2 S-adenosyl-L-methionine = (sulfur carrier)-H + biotin + 2 5'-deoxyadenosine + 2 L-methionine + 2 oxidized [2Fe-2S]-[ferredoxin]. Its pathway is cofactor biosynthesis; biotin biosynthesis; biotin from 7,8-diaminononanoate: step 2/2. In terms of biological role, catalyzes the conversion of dethiobiotin (DTB) to biotin by the insertion of a sulfur atom into dethiobiotin via a radical-based mechanism. The polypeptide is Biotin synthase (Yersinia pseudotuberculosis serotype O:1b (strain IP 31758)).